Reading from the N-terminus, the 246-residue chain is Flagellar brake protein YcgR (246 aa).

Positions 122-234 (QRREFFRIQT…PMETIIQRYV (113 aa)) constitute a PilZ domain.

Belongs to the YcgR family. In terms of assembly, monomer. Interacts with the flagellar basal bodies.

The protein localises to the bacterial flagellum basal body. Functionally, acts as a flagellar brake, regulating swimming and swarming in a bis-(3'-5') cyclic diguanylic acid (c-di-GMP)-dependent manner. Binds 1 c-di-GMP dimer per subunit. Increasing levels of c-di-GMP lead to decreased motility. This is Flagellar brake protein YcgR from Chromobacterium violaceum (strain ATCC 12472 / DSM 30191 / JCM 1249 / CCUG 213 / NBRC 12614 / NCIMB 9131 / NCTC 9757 / MK).